The primary structure comprises 97 residues: Aspartyl/glutamyl-tRNA(Asn/Gln) amidotransferase subunit C (97 aa).

The protein belongs to the GatC family. Heterotrimer of A, B and C subunits.

The catalysed reaction is L-glutamyl-tRNA(Gln) + L-glutamine + ATP + H2O = L-glutaminyl-tRNA(Gln) + L-glutamate + ADP + phosphate + H(+). The enzyme catalyses L-aspartyl-tRNA(Asn) + L-glutamine + ATP + H2O = L-asparaginyl-tRNA(Asn) + L-glutamate + ADP + phosphate + 2 H(+). Allows the formation of correctly charged Asn-tRNA(Asn) or Gln-tRNA(Gln) through the transamidation of misacylated Asp-tRNA(Asn) or Glu-tRNA(Gln) in organisms which lack either or both of asparaginyl-tRNA or glutaminyl-tRNA synthetases. The reaction takes place in the presence of glutamine and ATP through an activated phospho-Asp-tRNA(Asn) or phospho-Glu-tRNA(Gln). The sequence is that of Aspartyl/glutamyl-tRNA(Asn/Gln) amidotransferase subunit C from Listeria innocua serovar 6a (strain ATCC BAA-680 / CLIP 11262).